The chain runs to 247 residues: MKNGIDFVETEAYARIYNFILMVDDSIKNSEQRQSKHHMDVLADITRIVSETEKDPSPQRYANMAAKTVFKKIYDTYDDEYLRNSFGNQIRLDYGTGHELNFLCYLYAQYCRGSIGIDCVFTILVKYFEIVRLFITKFNLEPAGSHGMWGLDDYQFLPFLFGSSELCNTTLRFDELDGSKCYFVAVEKKLGGSSRILKSIMDKDWASINRGMIRMYDDHVLRRSVVTQHFIYGEYLRKDRSQANKDL.

Belongs to the PTPA-type PPIase family.

The protein localises to the cytoplasm. It catalyses the reaction [protein]-peptidylproline (omega=180) = [protein]-peptidylproline (omega=0). Functionally, PPIases accelerate the folding of proteins. It catalyzes the cis-trans isomerization of proline imidic peptide bonds in oligopeptides. Acts as a regulatory subunit for PP2A-like phosphatases modulating their activity or substrate specificity, probably by inducing a conformational change in the catalytic subunit, a direct target of the PPIase. Can reactivate inactive phosphatase PP2A-phosphatase methylesterase complexes (PP2Ai) in presence of ATP and Mg(2+) by dissociating the inactive form from the complex. This is Serine/threonine-protein phosphatase 2A activator from Encephalitozoon cuniculi (strain GB-M1) (Microsporidian parasite).